Reading from the N-terminus, the 370-residue chain is Alanine racemase (370 aa).

K39 (proton acceptor; specific for D-alanine) is an active-site residue. The residue at position 39 (K39) is an N6-(pyridoxal phosphate)lysine. Residue R137 participates in substrate binding. Y258 functions as the Proton acceptor; specific for L-alanine in the catalytic mechanism. M306 contributes to the substrate binding site.

This sequence belongs to the alanine racemase family. Pyridoxal 5'-phosphate serves as cofactor.

It carries out the reaction L-alanine = D-alanine. Its pathway is amino-acid biosynthesis; D-alanine biosynthesis; D-alanine from L-alanine: step 1/1. Functionally, catalyzes the interconversion of L-alanine and D-alanine. May also act on other amino acids. This is Alanine racemase (alr) from Methylobacterium nodulans (strain LMG 21967 / CNCM I-2342 / ORS 2060).